A 491-amino-acid polypeptide reads, in one-letter code: Probable cytosol aminopeptidase (491 aa).

Residues Lys260 and Asp265 each contribute to the Mn(2+) site. Lys272 is an active-site residue. Residues Asp284, Asp343, and Glu345 each coordinate Mn(2+). Residue Arg347 is part of the active site.

It belongs to the peptidase M17 family. Requires Mn(2+) as cofactor.

The protein localises to the cytoplasm. The catalysed reaction is Release of an N-terminal amino acid, Xaa-|-Yaa-, in which Xaa is preferably Leu, but may be other amino acids including Pro although not Arg or Lys, and Yaa may be Pro. Amino acid amides and methyl esters are also readily hydrolyzed, but rates on arylamides are exceedingly low.. The enzyme catalyses Release of an N-terminal amino acid, preferentially leucine, but not glutamic or aspartic acids.. Its function is as follows. Presumably involved in the processing and regular turnover of intracellular proteins. Catalyzes the removal of unsubstituted N-terminal amino acids from various peptides. The protein is Probable cytosol aminopeptidase of Rippkaea orientalis (strain PCC 8801 / RF-1) (Cyanothece sp. (strain PCC 8801)).